A 2089-amino-acid chain; its full sequence is Rho GTPase-activating protein 32 (2089 aa).

Residues 24–52 (TQLTDGDEEEREESFRKMKSSIHSEEDDF) form a disordered region. The 115-residue stretch at 131–245 (GSIQLSLSEE…LTWMEIDNKG (115 aa)) folds into the PX; atypical domain. The SH3 domain maps to 259 to 321 (PAVGAAHVIK…PGHCVELINQ (63 aa)). The region spanning 372 to 567 (CDLGEHLLNS…FILNHVDVLF (196 aa)) is the Rho-GAP domain. Serine 706, serine 709, serine 732, and serine 738 each carry phosphoserine. Basic and acidic residues predominate over residues 828–837 (KLSPSKKDAE). The interval 828–858 (KLSPSKKDAEAGGSQSQTPGSTASSEPVSPV) is disordered. Residues 840–854 (GSQSQTPGSTASSEP) are compositionally biased toward polar residues. A phosphoserine mark is found at serine 852, serine 856, serine 892, and serine 952. Disordered stretches follow at residues 955-1037 (QLQL…PPPP), 1119-1141 (CNQPLPEAAAMGGPTQSNTTDSG), and 1154-1197 (LHRN…SVST). Composition is skewed to polar residues over residues 998–1014 (LSSQSKAVPSGQSQTGA) and 1132–1141 (PTQSNTTDSG). Over residues 1175–1191 (DSEKSDDHGSFPEDHAG) the composition is skewed to basic and acidic residues. Residue serine 1206 is modified to Phosphoserine. A disordered region spans residues 1221-1368 (GTSVDKPHHS…GDPAPIFLSD (148 aa)). A compositionally biased stretch (basic and acidic residues) spans 1225–1235 (DKPHHSSELTD). A compositionally biased stretch (low complexity) spans 1262–1275 (TATMAYMMATPARA). The tract at residues 1395-1714 (RAPPLHLRAE…YNYAGLPPRP (320 aa)) is interaction with GAB2. Residues arginine 1526 and arginine 1536 each carry the asymmetric dimethylarginine modification. Residue serine 1588 is modified to Phosphoserine. Residues 1688-2089 (SSRDFAFYNP…PHPDTQIHAE (402 aa)) are interaction with FYN. Disordered regions lie at residues 1801–1865 (PGKT…QSSL) and 1881–2002 (RAHQ…LERD). Basic and acidic residues predominate over residues 1826–1841 (GDERFYRKHPESEFDR). Polar residues predominate over residues 1850 to 1865 (STQAEKPSLPQKQSSL). A compositionally biased stretch (basic and acidic residues) spans 1881-1892 (RAHQEASHRQLC). A compositionally biased stretch (polar residues) spans 1918–1939 (SEPSNYHNSGKYMTSGQGSLTL). Basic and acidic residues-rich tracts occupy residues 1940 to 1954 (NHKEVRLPKDLDRPR) and 1961 to 1975 (PEKHSRDCYKEEEHF). An Omega-N-methylarginine modification is found at arginine 2039.

This sequence belongs to the PX domain-containing GAP family. As to quaternary structure, interacts with NTRK1 (via cytoplasmic domain); the interaction is independent of the phosphorylation state of NTRK1. Interacts with SHC3 (via SH2 domain). Interacts with RASA1 (via SH3 domain); the interaction is necessary for the Ras activation and cell transforming activities of ARHGAP32. Interacts with GAB1 and GAB2. Interacts with CRK and CRKL. Found in a complex with CRKL and BCAR1; upon EGF stimulation BCAR1 may be replaced by EGFR. Interacts with NCK1 (via SH3 domain); NCK1 recruits phosphorylated BCAR1 to the complex. Isoform 2 interacts with FYN; the interaction appears to be dependent on tyrosine phosphorylation of ARHGAP32. Interacts with EGFR; the interaction requires EGF stimulation and is increased by SHC3. Interacts with CDC42; the interaction requires constitutively active CDC42. Interacts with CTNNB1, DLG4, CDH2 and GRIN2B. Interacts with GPHN. Isoform 2 is phosphorylated on multiple tyrosine residues by FYN. Phosphorylated tyrosine residues undergo dephosphorylation after stimulation of NMDA receptors. Phosphorylated in vitro by CaMK2 in the presence of calmodulin and calcium; which inhibits GAP activity. As to expression, isoform 1 and isoform 2 are highly expressed in brain, specially in cortex, corpus striatum, hippocampus and thalamus. Low levels in cerebellum, colon, small intestine, and kidney.

The protein resides in the postsynaptic density. It is found in the cell projection. Its subcellular location is the dendritic spine. The protein localises to the cytoplasm. It localises to the cell cortex. The protein resides in the endosome membrane. It is found in the golgi apparatus membrane. Its subcellular location is the endoplasmic reticulum membrane. The protein localises to the membrane. Its function is as follows. GTPase-activating protein (GAP) promoting GTP hydrolysis on RHOA, CDC42 and RAC1 small GTPases. May be involved in the differentiation of neuronal cells during the formation of neurite extensions. Involved in NMDA receptor activity-dependent actin reorganization in dendritic spines. May mediate cross-talks between Ras- and Rho-regulated signaling pathways in cell growth regulation. Isoform 2 has higher GAP activity. This Mus musculus (Mouse) protein is Rho GTPase-activating protein 32 (Arhgap32).